The following is a 91-amino-acid chain: LYR motif-containing protein 4 (91 aa).

R6 and K44 together coordinate pantetheine 4'-phosphate. Position 47 is an N6-succinyllysine (K47).

This sequence belongs to the complex I LYR family. In terms of assembly, homodimer. Component of the mitochondrial core iron-sulfur cluster (ISC) complex composed of NFS1, LYRM4, NDUFAB1, ISCU, FXN, and FDX2; this complex is a heterohexamer containing two copies of each monomer. Component of the cyteine desulfurase complex composed of NFS1, LYRM4 and NDUFAB1; this complex contributes to the stability and cysteine desulfurase activity of NFS1. Interacts with FXN; this interaction is nickel-dependent. Interacts with the cytoplasmic form of NFS1; the complex increases the stability of NFS1. Forms a complex with the cytoplasmic form of NFS1; this complex increases the stability and cysteine desulfurase activity of NFS1. Interacts with NFS1.

The protein resides in the mitochondrion. The protein localises to the nucleus. It participates in cofactor biosynthesis; iron-sulfur cluster biosynthesis. Stabilizing factor, of the core iron-sulfur cluster (ISC) assembly complex, that regulates, in association with NDUFAB1, the stability and the cysteine desulfurase activity of NFS1 and participates in the [2Fe-2S] clusters assembly on the scaffolding protein ISCU. The core iron-sulfur cluster (ISC) assembly complex is involved in the de novo synthesis of a [2Fe-2S] cluster, the first step of the mitochondrial iron-sulfur protein biogenesis. This process is initiated by the cysteine desulfurase complex (NFS1:LYRM4:NDUFAB1) that produces persulfide which is delivered on the scaffold protein ISCU in a FXN-dependent manner. Then this complex is stabilized by FDX2 which provides reducing equivalents to accomplish the [2Fe-2S] cluster assembly. Finally, the [2Fe-2S] cluster is transferred from ISCU to chaperone proteins, including HSCB, HSPA9 and GLRX5. May also participates in the iron-sulfur protein biogenesis in the cytoplasm through its interaction with the cytoplasmic form of NFS1. This chain is LYR motif-containing protein 4, found in Bos taurus (Bovine).